The primary structure comprises 252 residues: Carbohydrate deacetylase (252 aa).

Mg(2+)-binding residues include His-59 and His-122.

Belongs to the YdjC deacetylase family. In terms of assembly, homodimer. Mg(2+) is required as a cofactor.

Its function is as follows. Probably catalyzes the deacetylation of acetylated carbohydrates an important step in the degradation of oligosaccharides. This is Carbohydrate deacetylase from Vibrio cholerae serotype O1 (strain ATCC 39541 / Classical Ogawa 395 / O395).